A 363-amino-acid polypeptide reads, in one-letter code: Small ribosomal subunit biogenesis GTPase RsgA (363 aa).

The 157-residue stretch at 112–268 (HQQVIAANID…LIDTPGMREL (157 aa)) folds into the CP-type G domain. Residues 157–160 (TKAD) and 210–218 (GSSGAGKST) contribute to the GTP site. Positions 291, 296, 298, and 304 each coordinate Zn(2+). Residues 340–363 (RVAQNNRGKGSGKRPASVDRPGRR) are disordered.

Belongs to the TRAFAC class YlqF/YawG GTPase family. RsgA subfamily. In terms of assembly, monomer. Associates with 30S ribosomal subunit, binds 16S rRNA. Zn(2+) serves as cofactor.

The protein localises to the cytoplasm. Its function is as follows. One of several proteins that assist in the late maturation steps of the functional core of the 30S ribosomal subunit. Helps release RbfA from mature subunits. May play a role in the assembly of ribosomal proteins into the subunit. Circularly permuted GTPase that catalyzes slow GTP hydrolysis, GTPase activity is stimulated by the 30S ribosomal subunit. The sequence is that of Small ribosomal subunit biogenesis GTPase RsgA from Xanthomonas euvesicatoria pv. vesicatoria (strain 85-10) (Xanthomonas campestris pv. vesicatoria).